The sequence spans 487 residues: Histamine H1 receptor (487 aa).

Topologically, residues 1–29 (MSLPNSSCLLEDKMCESNKTTMASPQLMP) are extracellular. N-linked (GlcNAc...) asparagine glycans are attached at residues Asn-5 and Asn-18. The chain crosses the membrane as a helical span at residues 30–50 (LVVVLSTICLVTVGLNLLVLY). Over 51–64 (AVRSERKLHTVGNL) the chain is Cytoplasmic. The helical transmembrane segment at 65–89 (YIVSLSVADLIVGAVVMPMNILYLL) threads the bilayer. Residues 90-97 (MSKWSLGR) are Extracellular-facing. The helical transmembrane segment at 98–123 (PLCLFWLSMDYVASTASIFSVFILCI) threads the bilayer. A disulfide bridge connects residues Cys-100 and Cys-180. The histamine site is built by Asp-107 and Thr-112. The segment at 107-112 (DYVAST) is important for agonist binding. At 124-144 (DRYRSVQQPLRYLKYRTKTRA) the chain is on the cytoplasmic side. Thr-140 and Thr-142 each carry phosphothreonine. A helical transmembrane segment spans residues 145–164 (SATILGAWFLSFLWVIPILG). At 165–188 (WNHFMQQTSVRREDKCETDFYDVT) the chain is on the extracellular side. Residues 189-211 (WFKVMTAIINFYLPTLLMLWFYA) form a helical membrane-spanning segment. Asn-198 contributes to the histamine binding site. Topologically, residues 212–416 (KIYKAVRQHC…MNRERKAAKQ (205 aa)) are cytoplasmic. Ser-230 carries the post-translational modification Phosphoserine. Basic and acidic residues predominate over residues 238–261 (KLRPENPKGDAKKPGKESPWEVLK). The interval 238-292 (KLRPENPKGDAKKPGKESPWEVLKRKPKDAGGGSVLKSPSQTPKEMKSPVVFSQE) is disordered. Thr-279 bears the Phosphothreonine mark. Residues Ser-344 and Ser-347 each carry the phosphoserine modification. Positions 345–377 (EISEDQMLGDSQSFSRTDSDTTTETASGKGKLR) are disordered. A compositionally biased stretch (polar residues) spans 353–370 (GDSQSFSRTDSDTTTETA). A phosphoserine mark is found at Ser-380, Ser-396, and Ser-398. The helical transmembrane segment at 417–440 (LGFIMAAFILCWIPYFIFFMVIAF) threads the bilayer. The tract at residues 424-428 (FILCW) is important for agonist binding. Histamine is bound at residue Tyr-431. A disulfide bridge connects residues Cys-441 and Cys-444. Residues 441–446 (CKNCCN) lie on the Extracellular side of the membrane. Residues 447–469 (EHLHMFTIWLGYINSTLNPLIYP) form a helical membrane-spanning segment. The Cytoplasmic portion of the chain corresponds to 470 to 487 (LCNENFKKTFKRILHIRS).

The protein belongs to the G-protein coupled receptor 1 family. In terms of processing, phosphorylation at sites in the second and third cytoplasmic loops independently contribute to agonist-induced receptor down-regulation.

It localises to the cell membrane. G-protein-coupled receptor for histamine, a biogenic amine that functions as an immune modulator and a neurotransmitter. Through the H1 receptor, histamine mediates the contraction of smooth muscles and increases capillary permeability due to contraction of terminal venules. Also mediates neurotransmission in the central nervous system and thereby regulates circadian rhythms, emotional and locomotor activities as well as cognitive functions. The sequence is that of Histamine H1 receptor from Gorilla gorilla gorilla (Western lowland gorilla).